A 599-amino-acid chain; its full sequence is Dictomallein-2 (599 aa).

An N-terminal signal peptide occupies residues 1–20 (MKLILIYLILVFNLFNFINC). A Peptidase M66 domain is found at 145–407 (PDVGQDYTLK…QNYFKNSIYY (263 aa)). His-298 contacts Zn(2+). Glu-299 is a catalytic residue. Zn(2+) is bound by residues His-302 and His-308.

The protein belongs to the dictomallein family. Zn(2+) serves as cofactor.

It is found in the secreted. In Dictyostelium discoideum (Social amoeba), this protein is Dictomallein-2 (dtmlB).